Consider the following 301-residue polypeptide: Protoheme IX farnesyltransferase (301 aa).

The next 9 helical transmembrane spans lie at 20-42 (FTEL…GMWL), 55-75 (VDVI…SGAF), 105-125 (ALMV…MTTW), 126-146 (QAGV…SLYA), 150-172 (LVSN…WFAV), 176-198 (FSIV…FYAI), 227-247 (MFFW…LGIV), 249-269 (VVLA…GFKM), and 280-300 (FVYS…ISIF).

This sequence belongs to the UbiA prenyltransferase family. Protoheme IX farnesyltransferase subfamily. Interacts with CtaA.

The protein resides in the cell membrane. It catalyses the reaction heme b + (2E,6E)-farnesyl diphosphate + H2O = Fe(II)-heme o + diphosphate. It functions in the pathway porphyrin-containing compound metabolism; heme O biosynthesis; heme O from protoheme: step 1/1. Its function is as follows. Converts heme B (protoheme IX) to heme O by substitution of the vinyl group on carbon 2 of heme B porphyrin ring with a hydroxyethyl farnesyl side group. The sequence is that of Protoheme IX farnesyltransferase from Listeria monocytogenes serotype 4b (strain CLIP80459).